The primary structure comprises 22 residues: Peptide PGLa-R1 (22 aa).

At L22 the chain carries Leucine amide.

Expressed by the skin glands.

Its subcellular location is the secreted. Functionally, antimicrobial peptide. The chain is Peptide PGLa-R1 from Xenopus ruwenzoriensis (Uganda clawed frog).